The sequence spans 392 residues: Protein O-glucosyltransferase 1 (392 aa).

An N-terminal signal peptide occupies residues 1–23 (MELGVSSQLWLWLLLLLLPPVPG). Intrachain disulfides connect C49-C56, C54-C357, C102-C108, and C263-C286. The N-linked (GlcNAc...) asparagine glycan is linked to N53. Residues 103–107 (MFPSR) form an interaction with the consensus sequence C-X-S-X-[PA]-C in peptide substrates region. Catalysis depends on D133, which acts as the Proton donor/acceptor. The interval 172-178 (AVWPIYP) is interaction with the consensus sequence C-X-S-X-[PA]-C in peptide substrates. Y177 serves as a coordination point for UDP-alpha-D-glucose. N-linked (GlcNAc...) asparagine glycosylation occurs at N204. UDP-alpha-D-glucose contacts are provided by residues S212, R218, and 274-279 (VAASFR). An N-linked (GlcNAc...) asparagine glycan is attached at N373. The Prevents secretion from ER signature appears at 389–392 (KIEL).

This sequence belongs to the glycosyltransferase 90 family.

Its subcellular location is the endoplasmic reticulum lumen. The enzyme catalyses L-seryl-[EGF-like domain protein] + UDP-alpha-D-xylose = 3-O-(beta-D-xylosyl)-L-seryl-[EGF-like domain protein] + UDP + H(+). The catalysed reaction is L-seryl-[EGF-like domain protein] + UDP-alpha-D-glucose = 3-O-(beta-D-glucosyl)-L-seryl-[EGF-like domain protein] + UDP + H(+). The protein operates within protein modification; protein glycosylation. Its function is as follows. Dual specificity glycosyltransferase that catalyzes the transfer of glucose and xylose from UDP-glucose and UDP-xylose, respectively, to a serine residue found in the consensus sequence of C-X-S-X-P-C. Specifically targets extracellular EGF repeats of protein such as CRB2, F7, F9 and NOTCH2. Acts as a positive regulator of Notch signaling by mediating O-glucosylation of Notch, leading to regulate muscle development. Notch glucosylation does not affect Notch ligand binding. Required during early development to promote gastrulation: acts by mediating O-glucosylation of CRB2, which is required for CRB2 localization to the cell membrane. The sequence is that of Protein O-glucosyltransferase 1 (POGLUT1) from Bos taurus (Bovine).